Reading from the N-terminus, the 479-residue chain is Ribosomal RNA small subunit methyltransferase F (479 aa).

Residues 125–131, Glu-149, Asp-176, and Asp-194 contribute to the S-adenosyl-L-methionine site; that span reads AAAPGSK. Cys-247 serves as the catalytic Nucleophile.

The protein belongs to the class I-like SAM-binding methyltransferase superfamily. RsmB/NOP family.

The protein resides in the cytoplasm. It catalyses the reaction cytidine(1407) in 16S rRNA + S-adenosyl-L-methionine = 5-methylcytidine(1407) in 16S rRNA + S-adenosyl-L-homocysteine + H(+). Its function is as follows. Specifically methylates the cytosine at position 1407 (m5C1407) of 16S rRNA. The protein is Ribosomal RNA small subunit methyltransferase F of Shigella sonnei (strain Ss046).